Consider the following 148-residue polypeptide: MRLHDLYPFPEERKTRKRVGRGSGSGLGCTSGKGNKGQNARAGGGVRPGFEGGQMPLQRRLPKRGFKNMFAVKYEVINLARLLAAFEGKAEITLDDIYDRGLCSLGSAVKILGEGDVTTAIKVEAHKFSASAVEKIRNAGGEAKALEG.

Positions 1 to 57 (MRLHDLYPFPEERKTRKRVGRGSGSGLGCTSGKGNKGQNARAGGGVRPGFEGGQMPL) are disordered. Gly residues-rich tracts occupy residues 21 to 35 (RGSG…GKGN) and 42 to 52 (AGGGVRPGFEG).

Belongs to the universal ribosomal protein uL15 family. In terms of assembly, part of the 50S ribosomal subunit.

In terms of biological role, binds to the 23S rRNA. This is Large ribosomal subunit protein uL15 from Nitratidesulfovibrio vulgaris (strain ATCC 29579 / DSM 644 / CCUG 34227 / NCIMB 8303 / VKM B-1760 / Hildenborough) (Desulfovibrio vulgaris).